The chain runs to 409 residues: Methylthioribose-1-phosphate isomerase (409 aa).

The Proton donor role is filled by D277.

Belongs to the eIF-2B alpha/beta/delta subunits family. MtnA subfamily.

It localises to the cytoplasm. It is found in the nucleus. The catalysed reaction is 5-(methylsulfanyl)-alpha-D-ribose 1-phosphate = 5-(methylsulfanyl)-D-ribulose 1-phosphate. It participates in amino-acid biosynthesis; L-methionine biosynthesis via salvage pathway; L-methionine from S-methyl-5-thio-alpha-D-ribose 1-phosphate: step 1/6. Catalyzes the interconversion of methylthioribose-1-phosphate (MTR-1-P) into methylthioribulose-1-phosphate (MTRu-1-P). The protein is Methylthioribose-1-phosphate isomerase of Scheffersomyces stipitis (strain ATCC 58785 / CBS 6054 / NBRC 10063 / NRRL Y-11545) (Yeast).